We begin with the raw amino-acid sequence, 128 residues long: Large ribosomal subunit protein bL12 (128 aa).

This sequence belongs to the bacterial ribosomal protein bL12 family. As to quaternary structure, homodimer. Part of the ribosomal stalk of the 50S ribosomal subunit. Forms a multimeric L10(L12)X complex, where L10 forms an elongated spine to which 2 to 4 L12 dimers bind in a sequential fashion. Binds GTP-bound translation factors.

Functionally, forms part of the ribosomal stalk which helps the ribosome interact with GTP-bound translation factors. Is thus essential for accurate translation. This is Large ribosomal subunit protein bL12 from Phenylobacterium zucineum (strain HLK1).